A 487-amino-acid polypeptide reads, in one-letter code: F-box/LRR-repeat protein At1g48400 (487 aa).

Residues arginine 9–serine 57 form the F-box domain. LRR repeat units follow at residues serine 71–arginine 97, histidine 125–alanine 153, serine 174–aspartate 199, threonine 225–serine 251, threonine 327–serine 358, and asparagine 359–glycine 384.

This is F-box/LRR-repeat protein At1g48400 from Arabidopsis thaliana (Mouse-ear cress).